The primary structure comprises 467 residues: MSIFSLLPELWLLGLVCALFVASISDKKQSVASWLPMAAGLGVLAALFALGERGEFLYAAYKLDGLSQFFKLLIAFGFAVVTGIAAGNKEGKDLTPDYFMLLALSAWGLMLLASCVELITLYLALELSSYSLYALIPLRGQDRRAAEAGIKYILFGAAVTALALFGLSYIIAAKHTTYLSGLAATSWSFADAPMAVIGLTLFLAGFFYKLALFPFHFWCPDVYQGAKNETAAYVATIPKLGAVVVLVRLAAFVAPHLEVTTILAILGAVSMTAGNLAALVQRDLKRLLGFSSVAHAGYVMLGLAAGSAAGMSAAAFYSLAYILMNLAAFYVVCAIAKNDENPSLDDLDGLYKRAPALAMILAVAAFSLVGLPPTAGFAGKLFLLSAAWDQGYHWLVIVAVLNTAISIYYYLSMVRHAYTGESDAPAIVWPRGYLIFGGALAVLVLLLGILPAPLYDLAAQAAGQLHP.

The next 13 helical transmembrane spans lie at 1 to 21, 31 to 51, 66 to 86, 99 to 119, 153 to 173, 195 to 215, 231 to 253, 258 to 280, 287 to 307, 315 to 335, 357 to 377, 394 to 414, and 434 to 454; these read MSIF…ALFV, VASW…FALG, LSQF…GIAA, FMLL…VELI, ILFG…IIAA, AVIG…LFPF, AAYV…AAFV, EVTT…AALV, LLGF…AAGS, AFYS…VCAI, LAMI…TAGF, WLVI…LSMV, and LIFG…PAPL.

Belongs to the complex I subunit 2 family. NDH-1 is composed of 14 different subunits. Subunits NuoA, H, J, K, L, M, N constitute the membrane sector of the complex.

It localises to the cell inner membrane. The catalysed reaction is a quinone + NADH + 5 H(+)(in) = a quinol + NAD(+) + 4 H(+)(out). Functionally, NDH-1 shuttles electrons from NADH, via FMN and iron-sulfur (Fe-S) centers, to quinones in the respiratory chain. The immediate electron acceptor for the enzyme in this species is believed to be ubiquinone. Couples the redox reaction to proton translocation (for every two electrons transferred, four hydrogen ions are translocated across the cytoplasmic membrane), and thus conserves the redox energy in a proton gradient. This Solidesulfovibrio magneticus (strain ATCC 700980 / DSM 13731 / RS-1) (Desulfovibrio magneticus) protein is NADH-quinone oxidoreductase subunit N 2.